The sequence spans 465 residues: Cysteine--tRNA ligase (465 aa).

C27 provides a ligand contact to Zn(2+). A 'HIGH' region motif is present at residues 29-39; the sequence is PTVYDDAHLGH. Residues C207, H237, and E241 each coordinate Zn(2+). The 'KMSKS' region motif lies at 269–273; the sequence is KMSKS. K272 lines the ATP pocket.

This sequence belongs to the class-I aminoacyl-tRNA synthetase family. As to quaternary structure, monomer. Requires Zn(2+) as cofactor.

It is found in the cytoplasm. The enzyme catalyses tRNA(Cys) + L-cysteine + ATP = L-cysteinyl-tRNA(Cys) + AMP + diphosphate. This chain is Cysteine--tRNA ligase, found in Helicobacter pylori (strain HPAG1).